Consider the following 35-residue polypeptide: Toxin Ado1 (35 aa).

3 disulfides stabilise this stretch: Cys-5–Cys-20, Cys-12–Cys-25, and Cys-19–Cys-32.

It localises to the secreted. Its function is as follows. Binds reversibly and blocks P/Q-type voltage-gated calcium channels (Cav). This chain is Toxin Ado1, found in Agriosphodrus dohrni (Japanese assassin-bug).